The sequence spans 740 residues: Catalase-peroxidase (740 aa).

The tract at residues 1–44 (MSDSCPVAHDGNTASTSESENPAIPSPTPTGNRPRTNRDWWPNQ) is disordered. A cross-link (tryptophyl-tyrosyl-methioninium (Trp-Tyr) (with M-257)) is located at residues 109–231 (WHAAGTYRIA…LGAVQMGLIY (123 aa)). H110 acts as the Proton acceptor in catalysis. Positions 231–257 (YVNPEGPNGQPDPVAAARDIRETFARM) form a cross-link, tryptophyl-tyrosyl-methioninium (Tyr-Met) (with W-109). H272 contributes to the heme b binding site.

Belongs to the peroxidase family. Peroxidase/catalase subfamily. In terms of assembly, homodimer or homotetramer. It depends on heme b as a cofactor. In terms of processing, formation of the three residue Trp-Tyr-Met cross-link is important for the catalase, but not the peroxidase activity of the enzyme.

It carries out the reaction H2O2 + AH2 = A + 2 H2O. The catalysed reaction is 2 H2O2 = O2 + 2 H2O. Bifunctional enzyme with both catalase and broad-spectrum peroxidase activity. The protein is Catalase-peroxidase of Rhodococcus erythropolis (strain PR4 / NBRC 100887).